The following is a 207-amino-acid chain: Thiamine-phosphate synthase (207 aa).

Residues 36 to 40 (QLRMK) and Asn68 contribute to the 4-amino-2-methyl-5-(diphosphooxymethyl)pyrimidine site. Mg(2+)-binding residues include Asp69 and Asp88. Residue Ser106 coordinates 4-amino-2-methyl-5-(diphosphooxymethyl)pyrimidine. 132 to 134 (TNT) contributes to the 2-[(2R,5Z)-2-carboxy-4-methylthiazol-5(2H)-ylidene]ethyl phosphate binding site. Lys135 provides a ligand contact to 4-amino-2-methyl-5-(diphosphooxymethyl)pyrimidine. 2-[(2R,5Z)-2-carboxy-4-methylthiazol-5(2H)-ylidene]ethyl phosphate is bound by residues Gly162 and 182 to 183 (VS).

It belongs to the thiamine-phosphate synthase family. Mg(2+) is required as a cofactor.

The enzyme catalyses 2-[(2R,5Z)-2-carboxy-4-methylthiazol-5(2H)-ylidene]ethyl phosphate + 4-amino-2-methyl-5-(diphosphooxymethyl)pyrimidine + 2 H(+) = thiamine phosphate + CO2 + diphosphate. The catalysed reaction is 2-(2-carboxy-4-methylthiazol-5-yl)ethyl phosphate + 4-amino-2-methyl-5-(diphosphooxymethyl)pyrimidine + 2 H(+) = thiamine phosphate + CO2 + diphosphate. It carries out the reaction 4-methyl-5-(2-phosphooxyethyl)-thiazole + 4-amino-2-methyl-5-(diphosphooxymethyl)pyrimidine + H(+) = thiamine phosphate + diphosphate. Its pathway is cofactor biosynthesis; thiamine diphosphate biosynthesis; thiamine phosphate from 4-amino-2-methyl-5-diphosphomethylpyrimidine and 4-methyl-5-(2-phosphoethyl)-thiazole: step 1/1. Its function is as follows. Condenses 4-methyl-5-(beta-hydroxyethyl)thiazole monophosphate (THZ-P) and 2-methyl-4-amino-5-hydroxymethyl pyrimidine pyrophosphate (HMP-PP) to form thiamine monophosphate (TMP). The sequence is that of Thiamine-phosphate synthase from Methanococcus maripaludis (strain C7 / ATCC BAA-1331).